The primary structure comprises 400 residues: Cysteine desulfurase (400 aa).

Pyridoxal 5'-phosphate is bound by residues 71–72, N150, Q178, and 198–200; these read GT and SGH. K201 carries the N6-(pyridoxal phosphate)lysine modification. A pyridoxal 5'-phosphate-binding site is contributed by T236. C324 functions as the Cysteine persulfide intermediate in the catalytic mechanism. C324 contacts [2Fe-2S] cluster.

This sequence belongs to the class-V pyridoxal-phosphate-dependent aminotransferase family. NifS/IscS subfamily. In terms of assembly, homodimer. Requires pyridoxal 5'-phosphate as cofactor.

The enzyme catalyses (sulfur carrier)-H + L-cysteine = (sulfur carrier)-SH + L-alanine. Its function is as follows. Catalyzes the removal of elemental sulfur atoms from cysteine to produce alanine. Seems to participate in the biosynthesis of the nitrogenase metalloclusters by providing the inorganic sulfur required for the Fe-S core formation. The chain is Cysteine desulfurase from Nostoc sp. (strain PCC 7120 / SAG 25.82 / UTEX 2576).